An 81-amino-acid polypeptide reads, in one-letter code: Photosystem I iron-sulfur center (81 aa).

2 consecutive 4Fe-4S ferredoxin-type domains span residues alanine 2 to tryptophan 31 and isoleucine 39 to tyrosine 68. [4Fe-4S] cluster is bound by residues cysteine 11, cysteine 14, cysteine 17, cysteine 21, cysteine 48, cysteine 51, cysteine 54, and cysteine 58.

The eukaryotic PSI reaction center is composed of at least 11 subunits. It depends on [4Fe-4S] cluster as a cofactor.

The protein localises to the plastid. Its subcellular location is the chloroplast thylakoid membrane. The catalysed reaction is reduced [plastocyanin] + hnu + oxidized [2Fe-2S]-[ferredoxin] = oxidized [plastocyanin] + reduced [2Fe-2S]-[ferredoxin]. In terms of biological role, apoprotein for the two 4Fe-4S centers FA and FB of photosystem I (PSI); essential for photochemical activity. FB is the terminal electron acceptor of PSI, donating electrons to ferredoxin. The C-terminus interacts with PsaA/B/D and helps assemble the protein into the PSI complex. Required for binding of PsaD and PsaE to PSI. PSI is a plastocyanin-ferredoxin oxidoreductase, converting photonic excitation into a charge separation, which transfers an electron from the donor P700 chlorophyll pair to the spectroscopically characterized acceptors A0, A1, FX, FA and FB in turn. In Gnetum gnemon (Spanish joint-fir), this protein is Photosystem I iron-sulfur center.